Reading from the N-terminus, the 638-residue chain is 1-deoxy-D-xylulose-5-phosphate synthase (638 aa).

Thiamine diphosphate-binding positions include His72 and 113-115 (GHA). Asp144 is a Mg(2+) binding site. Residues 145-146 (GA), Asn174, Tyr289, and Glu372 contribute to the thiamine diphosphate site. Position 174 (Asn174) interacts with Mg(2+).

Belongs to the transketolase family. DXPS subfamily. As to quaternary structure, homodimer. Requires Mg(2+) as cofactor. It depends on thiamine diphosphate as a cofactor.

The catalysed reaction is D-glyceraldehyde 3-phosphate + pyruvate + H(+) = 1-deoxy-D-xylulose 5-phosphate + CO2. Its pathway is metabolic intermediate biosynthesis; 1-deoxy-D-xylulose 5-phosphate biosynthesis; 1-deoxy-D-xylulose 5-phosphate from D-glyceraldehyde 3-phosphate and pyruvate: step 1/1. In terms of biological role, catalyzes the acyloin condensation reaction between C atoms 2 and 3 of pyruvate and glyceraldehyde 3-phosphate to yield 1-deoxy-D-xylulose-5-phosphate (DXP). In Gloeobacter violaceus (strain ATCC 29082 / PCC 7421), this protein is 1-deoxy-D-xylulose-5-phosphate synthase.